A 128-amino-acid chain; its full sequence is Cytochrome c-type biogenesis protein CcmE (128 aa).

Residues 1-8 (MQKRVRNR) lie on the Cytoplasmic side of the membrane. Residues 9-29 (LITIIICFCSAFLGIGIILYN) traverse the membrane as a helical; Signal-anchor for type II membrane protein segment. At 30 to 128 (LENNIVFFLP…KHDENYRPTR (99 aa)) the chain is on the periplasmic side. Positions 120 and 124 each coordinate heme.

Belongs to the CcmE/CycJ family.

The protein resides in the cell inner membrane. Its function is as follows. Heme chaperone required for the biogenesis of c-type cytochromes. Transiently binds heme delivered by CcmC and transfers the heme to apo-cytochromes in a process facilitated by CcmF and CcmH. The polypeptide is Cytochrome c-type biogenesis protein CcmE (Rickettsia canadensis (strain McKiel)).